We begin with the raw amino-acid sequence, 246 residues long: Pyridoxine 5'-phosphate synthase (246 aa).

N12 lines the 3-amino-2-oxopropyl phosphate pocket. 14 to 15 (DH) contacts 1-deoxy-D-xylulose 5-phosphate. R23 provides a ligand contact to 3-amino-2-oxopropyl phosphate. Residue H48 is the Proton acceptor of the active site. R50 and H55 together coordinate 1-deoxy-D-xylulose 5-phosphate. The Proton acceptor role is filled by E75. Residue T105 participates in 1-deoxy-D-xylulose 5-phosphate binding. H196 serves as the catalytic Proton donor. 3-amino-2-oxopropyl phosphate-binding positions include G197 and 218–219 (GH).

It belongs to the PNP synthase family. Homooctamer; tetramer of dimers.

It is found in the cytoplasm. It carries out the reaction 3-amino-2-oxopropyl phosphate + 1-deoxy-D-xylulose 5-phosphate = pyridoxine 5'-phosphate + phosphate + 2 H2O + H(+). It functions in the pathway cofactor biosynthesis; pyridoxine 5'-phosphate biosynthesis; pyridoxine 5'-phosphate from D-erythrose 4-phosphate: step 5/5. Functionally, catalyzes the complicated ring closure reaction between the two acyclic compounds 1-deoxy-D-xylulose-5-phosphate (DXP) and 3-amino-2-oxopropyl phosphate (1-amino-acetone-3-phosphate or AAP) to form pyridoxine 5'-phosphate (PNP) and inorganic phosphate. In Thioalkalivibrio sulfidiphilus (strain HL-EbGR7), this protein is Pyridoxine 5'-phosphate synthase.